A 703-amino-acid chain; its full sequence is MKLNIFASAILLCTSAFPVAASRLDKPYTEVYRPQYHFSPKENWMNDPNGLVYDTDEGIYHIYFQYNPGGTTWGAMSWGHATSRDLMHWTEHPVALRARGFPDNITEMFFSGTVVVDESNTSGFGRKGKVPWVAIYTSYYPMEQVLPSGKRVRKDQQAQSIAYSLDKGMTWTTYDAANPVIAEPPAPYHDQHLEFRDPSVFWHVETSRWVAVVSLAKLHKILIYTSQDLKQWDWVSEFGPANAVGGVWECPSIFPLTLDGSQQDKWVLMLGLNPGGPPGTIGSGTQYIVGDFNGTTFTADADSIYDGSGPNDGMIFEDFEGDESLAARGWATTGDFINASPVRGTLSGQNAVTGFQGQQLFNTFLNGDATTGAITSAPFDITYKYINFLVGGGNDINETAIRLNVNGKTVHASTGSNDEHLTWQSWDVSSLKGQRAVIEIIDNASDGWGHINVDQICFSNTRATNQIANWLDWGPDFYAALSFNGLDRDQRTILAWMNNWQYGAAIPTDPWRSAMTVPRRLALKTIDGKPSLVQQPAGRWRTSGNHGREFSFRAVDGVRPLGRLGKALDIELTFSSNMSPSNGLGEFGVSIAATKGYQYGTRVGYDFATQQVFVDRSRSGDVSFDATFPGVYHAPLSNSANGTISLRILLDWSSVEVFGAHGEATITSQIFPGPDAVYGQLFSSGGQTRDVSLQVREIQSTWH.

The first 21 residues, 1–21, serve as a signal peptide directing secretion; sequence MKLNIFASAILLCTSAFPVAA. Asp47 is an active-site residue. 6 N-linked (GlcNAc...) asparagine glycosylation sites follow: Asn104, Asn120, Asn293, Asn397, Asn443, and Asn641.

The protein belongs to the glycosyl hydrolase 32 family.

The protein is Putative glycosyl hydrolase ecdE of Aspergillus rugulosus (Emericella rugulosa).